The chain runs to 236 residues: Methylosome subunit pICln (236 aa).

Ser2 is modified (N-acetylserine). Phosphoserine is present on residues Ser95, Ser143, Ser192, Ser194, Ser197, and Ser209. The tract at residues 134–158 (LHPDPEDEDSDDYDGEEYDVEAHEQ) is disordered. The segment covering 138–152 (PEDEDSDDYDGEEYD) has biased composition (acidic residues). Residue Thr222 is modified to Phosphothreonine.

It belongs to the pICln (TC 1.A.47) family. In terms of assembly, component of the methylosome, a 20S complex containing at least PRMT5/SKB1, WDR77/MEP50 and CLNS1A/pICln. May mediate SNRPD1 and SNRPD3 methylation. Forms a 6S pICln-Sm complex composed of CLNS1A/pICln, SNRPD1, SNRPD2, SNRPE, SNRPF and SNRPG; ring-like structure where CLNS1A/pICln mimics additional Sm proteins and which is unable to assemble into the core snRNP. Interacts with LSM10 and LSM11. In terms of tissue distribution, expressed in most tissues.

It localises to the cytoplasm. It is found in the cytosol. The protein localises to the nucleus. Its subcellular location is the cytoskeleton. In terms of biological role, involved in both the assembly of spliceosomal snRNPs and the methylation of Sm proteins. Chaperone that regulates the assembly of spliceosomal U1, U2, U4 and U5 small nuclear ribonucleoproteins (snRNPs), the building blocks of the spliceosome, and thereby plays an important role in the splicing of cellular pre-mRNAs. Most spliceosomal snRNPs contain a common set of Sm proteins SNRPB, SNRPD1, SNRPD2, SNRPD3, SNRPE, SNRPF and SNRPG that assemble in a heptameric protein ring on the Sm site of the small nuclear RNA to form the core snRNP (Sm core). In the cytosol, the Sm proteins SNRPD1, SNRPD2, SNRPE, SNRPF and SNRPG are trapped in an inactive 6S pICln-Sm complex by the chaperone CLNS1A that controls the assembly of the core snRNP. Dissociation by the SMN complex of CLNS1A from the trapped Sm proteins and their transfer to an SMN-Sm complex triggers the assembly of core snRNPs and their transport to the nucleus. The chain is Methylosome subunit pICln (Clns1a) from Rattus norvegicus (Rat).